Consider the following 310-residue polypeptide: Aspartate carbamoyltransferase catalytic subunit (310 aa).

Residues arginine 55 and threonine 56 each coordinate carbamoyl phosphate. Lysine 85 provides a ligand contact to L-aspartate. Residues arginine 106, histidine 135, and glutamine 138 each coordinate carbamoyl phosphate. Arginine 168 and arginine 230 together coordinate L-aspartate. Carbamoyl phosphate contacts are provided by leucine 268 and proline 269.

This sequence belongs to the aspartate/ornithine carbamoyltransferase superfamily. ATCase family. In terms of assembly, heterododecamer (2C3:3R2) of six catalytic PyrB chains organized as two trimers (C3), and six regulatory PyrI chains organized as three dimers (R2).

It catalyses the reaction carbamoyl phosphate + L-aspartate = N-carbamoyl-L-aspartate + phosphate + H(+). It participates in pyrimidine metabolism; UMP biosynthesis via de novo pathway; (S)-dihydroorotate from bicarbonate: step 2/3. Its function is as follows. Catalyzes the condensation of carbamoyl phosphate and aspartate to form carbamoyl aspartate and inorganic phosphate, the committed step in the de novo pyrimidine nucleotide biosynthesis pathway. This chain is Aspartate carbamoyltransferase catalytic subunit, found in Buchnera aphidicola subsp. Acyrthosiphon pisum (strain APS) (Acyrthosiphon pisum symbiotic bacterium).